Here is a 712-residue protein sequence, read N- to C-terminus: Rap1 GTPase-activating protein 2 (712 aa).

The disordered stretch occupies residues 1 to 33 (MLAGLKVKKQELANSSDVTLPDRPLSPPLTAPP). Position 26 is a phosphoserine (S26). T30 is subject to Phosphothreonine. The region spanning 229-445 (IVSYDEHDVN…RTRAALLDNL (217 aa)) is the Rap-GAP domain. A phosphoserine mark is found at S488, S495, S525, S539, S545, S593, and S594. The interval 529–712 (AAATAKNQSR…LSHASSSAGH (184 aa)) is disordered. The span at 566–594 (DSASSTPKTPDGGHSSQEIKSETSSNPSS) shows a compositional bias: polar residues. Residues 599-612 (PNKEKPFIKLKENG) show a composition bias toward basic and acidic residues. A compositionally biased stretch (low complexity) spans 617–629 (SRSSSSTSSFSST). Polar residues predominate over residues 641-652 (SGSSQPSTTSPF). Low complexity predominate over residues 660–669 (SPSPSSESPS). A compositionally biased stretch (polar residues) spans 681-694 (RSPTDAKSRNSPRS).

It localises to the cytoplasm. Functionally, GTPase activator for the nuclear Ras-related regulatory protein RAP-1A (KREV-1), converting it to the putatively inactive GDP-bound state. The chain is Rap1 GTPase-activating protein 2 (Rap1gap2) from Mus musculus (Mouse).